Reading from the N-terminus, the 149-residue chain is NPC intracellular cholesterol transporter 2 (149 aa).

Positions 1 to 21 (MRLLVAAFLLLALGDLGPGGA) are cleaved as a signal peptide. Cystine bridges form between cysteine 27-cysteine 140, cysteine 42-cysteine 47, and cysteine 93-cysteine 99. Residue asparagine 58 is glycosylated (N-linked (GlcNAc...) asparagine). Lysine 116 carries the N6-acetyllysine modification.

Belongs to the NPC2 family. As to quaternary structure, interacts with NPC1 (via the second lumenal domain) in a cholestrol-dependent manner. Interacts with NUS1/NgBR, the interaction stabilizes NCP2 and regulates cholesterol trafficking. Interacts with DHDDS. Interacts with NEDD4L (via C2 domain). Interacts with NPC1L1. In terms of tissue distribution, epididymis. High levels are found in the caput and corpus regions. Weaker levels in the distal cauda and in the efferent ducts.

The protein localises to the secreted. It is found in the endoplasmic reticulum. The protein resides in the lysosome. The catalysed reaction is cholesterol(in) = cholesterol(out). Intracellular cholesterol transporter which acts in concert with NPC1 and plays an important role in the egress of cholesterol from the lysosomal compartment. Unesterified cholesterol that has been released from LDLs in the lumen of the late endosomes/lysosomes is transferred by NPC2 to the cholesterol-binding pocket in the N-terminal domain of NPC1. May bind and mobilize cholesterol that is associated with membranes. NPC2 binds cholesterol with a 1:1 stoichiometry. Can bind a variety of sterols, including lathosterol, desmosterol and the plant sterols stigmasterol and beta-sitosterol. The secreted form of NCP2 regulates biliary cholesterol secretion via stimulation of ABCG5/ABCG8-mediated cholesterol transport. In Canis lupus familiaris (Dog), this protein is NPC intracellular cholesterol transporter 2.